The following is a 159-amino-acid chain: MSDEEHHFESKADAGASKTYPQQAGTIRKNGHIVIKNRPCKVVEVSTSKTGKHGHAKCHFVAIDIFTGKKLEDIVPSSHNCDVPHVNRTDYQLIDISEDGFVSLLTENGNTKDDLRLPTDDNLLALIKDGFAEGKDLVLSVMSAMGEEQICGIKDVGPK.

Positions 1-12 (MSDEEHHFESKA) are enriched in basic and acidic residues. Residues 1–23 (MSDEEHHFESKADAGASKTYPQQ) are disordered. Lys52 carries the hypusine modification.

Belongs to the eIF-5A family. In terms of processing, lys-52 undergoes hypusination, a unique post-translational modification that consists in the addition of a butylamino group from spermidine to lysine side chain, leading to the formation of the unusual amino acid hypusine. eIF-5As are the only known proteins to undergo this modification, which is essential for their function.

Functionally, translation factor that promotes translation elongation and termination, particularly upon ribosome stalling at specific amino acid sequence contexts. Binds between the exit (E) and peptidyl (P) site of the ribosome and promotes rescue of stalled ribosome: specifically required for efficient translation of polyproline-containing peptides as well as other motifs that stall the ribosome. Acts as a ribosome quality control (RQC) cofactor by joining the RQC complex to facilitate peptidyl transfer during CAT tailing step. The protein is Eukaryotic translation initiation factor 5A-1 (EIF-5A1) of Nicotiana plumbaginifolia (Leadwort-leaved tobacco).